The chain runs to 331 residues: 2-oxoglutarate-dependent dioxygenase (331 aa).

Positions Pro-186–Gly-292 constitute a Fe2OG dioxygenase domain. Fe cation-binding residues include His-214, Asp-216, and His-272. Residue Arg-283 coordinates 2-oxoglutarate.

It belongs to the iron/ascorbate-dependent oxidoreductase family. Fe(2+) serves as cofactor.

It participates in mycotoxin biosynthesis. Its function is as follows. 2-oxoglutarate-dependent dioxygenase; part of the gene cluster that mediates the biosynthesis of the selective antifungal agent ascochitine, an o-quinone methide that plays a possible protective role against other microbial competitors in nature and is considered to be important for pathogenicity of legume-associated Didymella species. The pathway probably begins with the synthesis of a keto-aldehyde intermediate by the ascochitine non-reducing polyketide synthase pksAC from successive condensations of 4 malonyl-CoA units, presumably with a simple acetyl-CoA starter unit. Release of the keto-aldehyde intermediate is consistent with the presence of the C-terminal reductive release domain. The HR-PKS (orf7) probably makes a diketide starter unit which is passed to the non-reducing polyketide synthase pksAC for further extension, producing ascochital and ascochitine. The aldehyde dehydrogenase (orf1), the 2-oxoglutarate-dependent dioxygenase (orf3) and the dehydrogenase (orf9) are probably involved in subsequent oxidations of methyl groups to the carboxylic acid of the heterocyclic ring. The ascochitine gene cluster also includes a gene encoding a short peptide with a cupin domain (orf2) that is often found in secondary metabolite gene clusters and which function has still to be determined. The sequence is that of 2-oxoglutarate-dependent dioxygenase from Didymella fabae (Leaf and pod spot disease fungus).